The sequence spans 209 residues: Thymidine kinase (209 aa).

Residues 9 to 16 (SAMNAGKT) and 88 to 91 (DEAQ) contribute to the ATP site. Glu-89 (proton acceptor) is an active-site residue.

The protein belongs to the thymidine kinase family. In terms of assembly, homotetramer.

The protein localises to the cytoplasm. It carries out the reaction thymidine + ATP = dTMP + ADP + H(+). The sequence is that of Thymidine kinase from Xanthomonas oryzae pv. oryzae (strain MAFF 311018).